The sequence spans 341 residues: Phenylalanine--tRNA ligase alpha subunit (341 aa).

Glu-256 contacts Mg(2+).

The protein belongs to the class-II aminoacyl-tRNA synthetase family. Phe-tRNA synthetase alpha subunit type 1 subfamily. Tetramer of two alpha and two beta subunits. It depends on Mg(2+) as a cofactor.

It localises to the cytoplasm. It catalyses the reaction tRNA(Phe) + L-phenylalanine + ATP = L-phenylalanyl-tRNA(Phe) + AMP + diphosphate + H(+). This is Phenylalanine--tRNA ligase alpha subunit from Chlamydia caviae (strain ATCC VR-813 / DSM 19441 / 03DC25 / GPIC) (Chlamydophila caviae).